The sequence spans 365 residues: GTPase Obg (365 aa).

In terms of domain architecture, Obg spans 1 to 159 (MKFIDEARIE…RMLKLELKVL (159 aa)). An OBG-type G domain is found at 160–334 (ADVGLLGMPN…LIYAIKDHLQ (175 aa)). Residues 166–173 (GMPNAGKS), 191–195 (FTTLH), 213–216 (DIPG), 284–287 (NKLD), and 315–317 (SAL) each bind GTP. The Mg(2+) site is built by Ser-173 and Thr-193.

The protein belongs to the TRAFAC class OBG-HflX-like GTPase superfamily. OBG GTPase family. In terms of assembly, monomer. The cofactor is Mg(2+).

It localises to the cytoplasm. Its function is as follows. An essential GTPase which binds GTP, GDP and possibly (p)ppGpp with moderate affinity, with high nucleotide exchange rates and a fairly low GTP hydrolysis rate. Plays a role in control of the cell cycle, stress response, ribosome biogenesis and in those bacteria that undergo differentiation, in morphogenesis control. The chain is GTPase Obg from Cupriavidus taiwanensis (strain DSM 17343 / BCRC 17206 / CCUG 44338 / CIP 107171 / LMG 19424 / R1) (Ralstonia taiwanensis (strain LMG 19424)).